We begin with the raw amino-acid sequence, 54 residues long: Large ribosomal subunit protein bL33 (54 aa).

Belongs to the bacterial ribosomal protein bL33 family.

This is Large ribosomal subunit protein bL33 from Corynebacterium jeikeium (strain K411).